The chain runs to 204 residues: Large ribosomal subunit protein eL15 (204 aa).

A disordered region spans residues Val-155–Arg-204. Residues Asn-191–Arg-204 show a composition bias toward basic residues.

This sequence belongs to the eukaryotic ribosomal protein eL15 family.

The polypeptide is Large ribosomal subunit protein eL15 (rpl-15) (Caenorhabditis elegans).